Reading from the N-terminus, the 481-residue chain is Phosphoenolpyruvate phosphatase (481 aa).

An N-terminal signal peptide occupies residues 1-36 (MPIYTSRSCFYLLLFHIILLCSVDKTLCRQTSSFVR). N-linked (GlcNAc...) asparagine glycosylation is present at asparagine 109. Positions 168, 195, and 198 each coordinate Fe cation. Position 195 (aspartate 195) interacts with Zn(2+). The N-linked (GlcNAc...) asparagine glycan is linked to asparagine 206. Zn(2+) contacts are provided by asparagine 232 and histidine 317. Substrate is bound at residue asparagine 232. Histidine 327 (proton donor) is an active-site residue. Histidine 354 provides a ligand contact to Zn(2+). Residue 354 to 356 (HVH) participates in substrate binding. Residue histidine 356 participates in Fe cation binding. N-linked (GlcNAc...) asparagine glycosylation is found at asparagine 370 and asparagine 427.

The protein belongs to the metallophosphoesterase superfamily. Purple acid phosphatase family.

It localises to the vacuole lumen. The catalysed reaction is phosphoenolpyruvate + H2O = pyruvate + phosphate. Its function is as follows. Phosphoenolpyruvate phosphatase that probably operates in the vacuole to release phosphate from phosphoenolpyruvate (PEP) under phosphorus starvation. The sequence is that of Phosphoenolpyruvate phosphatase (ACPEPP) from Allium cepa (Onion).